A 33-amino-acid chain; its full sequence is MGSVIKKRRKRMSKKKHRKLLRRTRVQRRKLGK.

Positions 1-33 are disordered; it reads MGSVIKKRRKRMSKKKHRKLLRRTRVQRRKLGK.

This is an uncharacterized protein from Mycobacterium tuberculosis (strain CDC 1551 / Oshkosh).